Reading from the N-terminus, the 647-residue chain is Threonine--tRNA ligase (647 aa).

Residues 1–61 (MINITFPDGA…TEDGSIEIVT (61 aa)) enclose the TGS domain. The segment at 242 to 540 (DHRKLGKELD…LIENYKGAFP (299 aa)) is catalytic. Zn(2+) contacts are provided by Cys336, His387, and His517.

It belongs to the class-II aminoacyl-tRNA synthetase family. As to quaternary structure, homodimer. Zn(2+) is required as a cofactor.

It is found in the cytoplasm. It carries out the reaction tRNA(Thr) + L-threonine + ATP = L-threonyl-tRNA(Thr) + AMP + diphosphate + H(+). In terms of biological role, catalyzes the attachment of threonine to tRNA(Thr) in a two-step reaction: L-threonine is first activated by ATP to form Thr-AMP and then transferred to the acceptor end of tRNA(Thr). Also edits incorrectly charged L-seryl-tRNA(Thr). This is Threonine--tRNA ligase from Streptococcus pneumoniae (strain P1031).